A 130-amino-acid polypeptide reads, in one-letter code: Biotin carboxyl carrier protein (130 aa).

Residues 20–64 form a disordered region; sequence EISESSVPAATPITPTTENTRAASDQKQQSQTPSPAATASAANTM. Over residues 23-46 the composition is skewed to polar residues; that stretch reads ESSVPAATPITPTTENTRAASDQK. The segment covering 47 to 64 has biased composition (low complexity); it reads QQSQTPSPAATASAANTM. One can recognise a Biotinyl-binding domain in the interval 55 to 130; it reads AATASAANTM…NAGDNLITIA (76 aa). Lysine 96 is modified (N6-biotinyllysine).

The chain is Biotin carboxyl carrier protein (bcc) from Streptococcus mutans serotype c (strain ATCC 700610 / UA159).